We begin with the raw amino-acid sequence, 213 residues long: Thiamine-phosphate synthase (213 aa).

Residues 43–47 and asparagine 74 contribute to the 4-amino-2-methyl-5-(diphosphooxymethyl)pyrimidine site; that span reads QLRDK. Mg(2+) contacts are provided by aspartate 75 and aspartate 94. Serine 113 is a 4-amino-2-methyl-5-(diphosphooxymethyl)pyrimidine binding site. 142–144 contacts 2-[(2R,5Z)-2-carboxy-4-methylthiazol-5(2H)-ylidene]ethyl phosphate; the sequence is TAT. Lysine 145 contacts 4-amino-2-methyl-5-(diphosphooxymethyl)pyrimidine. 2-[(2R,5Z)-2-carboxy-4-methylthiazol-5(2H)-ylidene]ethyl phosphate is bound by residues glycine 173 and 193 to 194; that span reads VS.

This sequence belongs to the thiamine-phosphate synthase family. Requires Mg(2+) as cofactor.

It carries out the reaction 2-[(2R,5Z)-2-carboxy-4-methylthiazol-5(2H)-ylidene]ethyl phosphate + 4-amino-2-methyl-5-(diphosphooxymethyl)pyrimidine + 2 H(+) = thiamine phosphate + CO2 + diphosphate. The enzyme catalyses 2-(2-carboxy-4-methylthiazol-5-yl)ethyl phosphate + 4-amino-2-methyl-5-(diphosphooxymethyl)pyrimidine + 2 H(+) = thiamine phosphate + CO2 + diphosphate. It catalyses the reaction 4-methyl-5-(2-phosphooxyethyl)-thiazole + 4-amino-2-methyl-5-(diphosphooxymethyl)pyrimidine + H(+) = thiamine phosphate + diphosphate. It functions in the pathway cofactor biosynthesis; thiamine diphosphate biosynthesis; thiamine phosphate from 4-amino-2-methyl-5-diphosphomethylpyrimidine and 4-methyl-5-(2-phosphoethyl)-thiazole: step 1/1. Functionally, condenses 4-methyl-5-(beta-hydroxyethyl)thiazole monophosphate (THZ-P) and 2-methyl-4-amino-5-hydroxymethyl pyrimidine pyrophosphate (HMP-PP) to form thiamine monophosphate (TMP). The chain is Thiamine-phosphate synthase from Psychrobacter sp. (strain PRwf-1).